We begin with the raw amino-acid sequence, 164 residues long: SsrA-binding protein (164 aa).

The disordered stretch occupies residues 141–164; that stretch reads KLHDKRQDEKQKSIKKEINSALKR. Over residues 145–158 the composition is skewed to basic and acidic residues; that stretch reads KRQDEKQKSIKKEI.

It belongs to the SmpB family.

The protein localises to the cytoplasm. Its function is as follows. Required for rescue of stalled ribosomes mediated by trans-translation. Binds to transfer-messenger RNA (tmRNA), required for stable association of tmRNA with ribosomes. tmRNA and SmpB together mimic tRNA shape, replacing the anticodon stem-loop with SmpB. tmRNA is encoded by the ssrA gene; the 2 termini fold to resemble tRNA(Ala) and it encodes a 'tag peptide', a short internal open reading frame. During trans-translation Ala-aminoacylated tmRNA acts like a tRNA, entering the A-site of stalled ribosomes, displacing the stalled mRNA. The ribosome then switches to translate the ORF on the tmRNA; the nascent peptide is terminated with the 'tag peptide' encoded by the tmRNA and targeted for degradation. The ribosome is freed to recommence translation, which seems to be the essential function of trans-translation. This Prochlorococcus marinus (strain MIT 9301) protein is SsrA-binding protein.